Here is a 494-residue protein sequence, read N- to C-terminus: Transcriptional regulator calD (494 aa).

The protein localises to the nucleus. Functionally, transcription co-regulator that might be involved in the regulation of the expression of the gene cluster that mediates the biosynthesis of calbistrins and related compounds such as decumbenones. Calbistrin A is a secondary metabolite with an interesting structure that was recently found to have bioactivity against leukemia cells. It consists of two polyketides linked by an ester bond: a bicyclic decalin containing polyketide and a linear 12 carbon dioic acid structure. The protein is Transcriptional regulator calD of Penicillium decumbens.